The sequence spans 630 residues: Polypeptide N-acetylgalactosaminyltransferase 5 (630 aa).

The Cytoplasmic segment spans residues 1–20 (MTFSTFTRKMRGRMRSNTCR). A helical; Signal-anchor for type II membrane protein membrane pass occupies residues 21–38 (IVLLTSLVWVIFDFVLIA). At 39 to 630 (RYSDCIGKDG…MESKFKWQAH (592 aa)) the chain is on the lumenal side. A glycan (N-linked (GlcNAc...) asparagine) is linked at Asn166. 5 disulfides stabilise this stretch: Cys177-Cys410, Cys401-Cys479, Cys513-Cys530, Cys553-Cys568, and Cys594-Cys611. The interval 186–296 (LPTTSIVIVF…EGWLEPLLAR (111 aa)) is catalytic subdomain A. Substrate contacts are provided by Asp227 and Arg257. Mn(2+)-binding residues include Asp280 and His282. Residues 356 to 418 (PLRTPTMAGG…PCSHVGHVFR (63 aa)) are catalytic subdomain B. Position 387 (Trp387) interacts with substrate. His415 is a binding site for Mn(2+). Residues Arg418 and Tyr423 each coordinate substrate. Residues 500–622 (YYLGEIRNAE…YGKGQQWLME (123 aa)) form the Ricin B-type lectin domain.

This sequence belongs to the glycosyltransferase 2 family. GalNAc-T subfamily. Requires Mn(2+) as cofactor. In terms of tissue distribution, expressed during oogenesis, in the somatically derived follicle cells that surround the developing oocyte, which are involved in the maturation of the oocyte and construction of the egg shell, as well as playing a role in subsequent embryonic pattern formation. During embryonic stages 9-11, expressed in the primordium of the foregut, midgut and hindgut. Expressed in salivary glands from embryonic stage 12 onwards. During embryonic stages 12-13, expressed in the posterior midgut and hindgut. During embryonic stages 14-17, expressed in the hindgut and the posterior spiracles. Expression is also detected in the epidermis and antennomaxillary complex at embryonic stages 16-17. In third instar larvae, ubiquitously expressed in wing, eye-antennal, leg and haltere imaginal disks.

The protein localises to the golgi apparatus membrane. It catalyses the reaction L-seryl-[protein] + UDP-N-acetyl-alpha-D-galactosamine = a 3-O-[N-acetyl-alpha-D-galactosaminyl]-L-seryl-[protein] + UDP + H(+). It carries out the reaction L-threonyl-[protein] + UDP-N-acetyl-alpha-D-galactosamine = a 3-O-[N-acetyl-alpha-D-galactosaminyl]-L-threonyl-[protein] + UDP + H(+). Its pathway is protein modification; protein glycosylation. Its function is as follows. Catalyzes the initial reaction in O-linked oligosaccharide biosynthesis, the transfer of an N-acetyl-D-galactosamine residue to a serine or threonine residue on the protein receptor. It can both act as a peptide transferase that transfers GalNAc onto unmodified peptide substrates, and as a glycopeptide transferase that requires the prior addition of a GalNAc on a peptide before adding additional GalNAc moieties. Prefers EA2 as substrate. In the larval midgut, required for O-glycosylation of apical and luminal proteins within copper cells enabling proper gut acidification. This Drosophila melanogaster (Fruit fly) protein is Polypeptide N-acetylgalactosaminyltransferase 5.